We begin with the raw amino-acid sequence, 349 residues long: Dihydroorotase (349 aa).

Residues His17 and His19 each coordinate Zn(2+). Substrate is bound by residues 19–21 (HLR) and Asn45. The Zn(2+) site is built by Lys103, His140, and His178. Lys103 is subject to N6-carboxylysine. His140 is a binding site for substrate. Leu224 lines the substrate pocket. Asp252 contributes to the Zn(2+) binding site. Residue Asp252 is part of the active site. Substrate contacts are provided by His256 and Ala268.

Belongs to the metallo-dependent hydrolases superfamily. DHOase family. Class II DHOase subfamily. In terms of assembly, homodimer. It depends on Zn(2+) as a cofactor.

The enzyme catalyses (S)-dihydroorotate + H2O = N-carbamoyl-L-aspartate + H(+). Its pathway is pyrimidine metabolism; UMP biosynthesis via de novo pathway; (S)-dihydroorotate from bicarbonate: step 3/3. Functionally, catalyzes the reversible cyclization of carbamoyl aspartate to dihydroorotate. This is Dihydroorotase from Buchnera aphidicola subsp. Schizaphis graminum (strain Sg).